The chain runs to 176 residues: Probable non-specific lipid-transfer protein 1 (176 aa).

The first 37 residues, 1 to 37 (MRTVSAPSAVALVVIVAAGLAWTSLASVAPPAPAPGS), serve as a signal peptide directing secretion. 4 disulfide bridges follow: Cys-41–Cys-89, Cys-51–Cys-66, Cys-67–Cys-112, and Cys-87–Cys-128. The interval 139 to 176 (QLPVSLRHGPVTGPSDPAHKARLERPQIRVPPPAPEKA) is disordered. A compositionally biased stretch (basic and acidic residues) spans 155–165 (PAHKARLERPQ). Positions 167–176 (RVPPPAPEKA) are enriched in pro residues.

Belongs to the plant LTP family.

Functionally, plant non-specific lipid-transfer proteins transfer phospholipids as well as galactolipids across membranes. May play a role in wax or cutin deposition in the cell walls of expanding epidermal cells and certain secretory tissues. The protein is Probable non-specific lipid-transfer protein 1 of Parietaria judaica (Pellitory-of-the-wall).